The chain runs to 728 residues: Catalase-peroxidase 1 (728 aa).

A cross-link (tryptophyl-tyrosyl-methioninium (Trp-Tyr) (with M-244)) is located at residues Trp-91–Tyr-218. The Proton acceptor role is filled by His-92. The segment at residues Tyr-218 to Met-244 is a cross-link (tryptophyl-tyrosyl-methioninium (Tyr-Met) (with W-91)). His-259 contributes to the heme b binding site.

Belongs to the peroxidase family. Peroxidase/catalase subfamily. As to quaternary structure, homodimer or homotetramer. The cofactor is heme b. In terms of processing, formation of the three residue Trp-Tyr-Met cross-link is important for the catalase, but not the peroxidase activity of the enzyme.

It carries out the reaction H2O2 + AH2 = A + 2 H2O. The catalysed reaction is 2 H2O2 = O2 + 2 H2O. In terms of biological role, bifunctional enzyme with both catalase and broad-spectrum peroxidase activity. This chain is Catalase-peroxidase 1, found in Burkholderia vietnamiensis (strain G4 / LMG 22486) (Burkholderia cepacia (strain R1808)).